A 215-amino-acid polypeptide reads, in one-letter code: Ependymin-2 (215 aa).

An N-terminal signal peptide occupies residues 1–20 (MHTVKLLCVVFSCLCAVAWA). N-linked (GlcNAc...) asparagine glycosylation is found at asparagine 71 and asparagine 94.

This sequence belongs to the ependymin family. Forms disulfide-linked dimers. In terms of processing, different glycosylation variants are known as EPD-beta and EPD-gamma. Binds calcium through the terminal sialic acids. EPDs are synthesized in the meninx and secreted in the cerebrospinal fluid.

It localises to the secreted. Functionally, may play a role in neural plasticity. May be involved during axon regeneration. The chain is Ependymin-2 (epd2) from Carassius auratus (Goldfish).